Here is a 945-residue protein sequence, read N- to C-terminus: Isoleucine--tRNA ligase (945 aa).

The 'HIGH' region signature appears at 66 to 76; the sequence is PYANGDIHLGH. Residue glutamate 581 coordinates L-isoleucyl-5'-AMP. The 'KMSKS' region motif lies at 622-626; it reads KMSKS. Position 625 (lysine 625) interacts with ATP. Zn(2+) is bound by residues cysteine 908, cysteine 911, cysteine 928, and cysteine 931.

This sequence belongs to the class-I aminoacyl-tRNA synthetase family. IleS type 1 subfamily. In terms of assembly, monomer. Zn(2+) is required as a cofactor.

The protein resides in the cytoplasm. The catalysed reaction is tRNA(Ile) + L-isoleucine + ATP = L-isoleucyl-tRNA(Ile) + AMP + diphosphate. Functionally, catalyzes the attachment of isoleucine to tRNA(Ile). As IleRS can inadvertently accommodate and process structurally similar amino acids such as valine, to avoid such errors it has two additional distinct tRNA(Ile)-dependent editing activities. One activity is designated as 'pretransfer' editing and involves the hydrolysis of activated Val-AMP. The other activity is designated 'posttransfer' editing and involves deacylation of mischarged Val-tRNA(Ile). This is Isoleucine--tRNA ligase from Burkholderia ambifaria (strain ATCC BAA-244 / DSM 16087 / CCUG 44356 / LMG 19182 / AMMD) (Burkholderia cepacia (strain AMMD)).